A 119-amino-acid chain; its full sequence is Non-specific lipid-transfer protein 12 (119 aa).

Residues 1–24 (MAFTPKIITCLIVLTIYMASPTES) form the signal peptide. 4 disulfide bridges follow: C28–C75, C38–C52, C53–C98, and C73–C112.

Belongs to the plant LTP family.

Its function is as follows. Plant non-specific lipid-transfer proteins transfer phospholipids as well as galactolipids across membranes. May play a role in wax or cutin deposition in the cell walls of expanding epidermal cells and certain secretory tissues. This Arabidopsis thaliana (Mouse-ear cress) protein is Non-specific lipid-transfer protein 12 (LTP12).